A 156-amino-acid chain; its full sequence is 6,7-dimethyl-8-ribityllumazine synthase (156 aa).

5-amino-6-(D-ribitylamino)uracil-binding positions include Phe-22, 57–59, and 81–83; these read AYE and TVI. A (2S)-2-hydroxy-3-oxobutyl phosphate-binding site is contributed by 86–87; the sequence is GT. His-89 acts as the Proton donor in catalysis. Phe-114 provides a ligand contact to 5-amino-6-(D-ribitylamino)uracil. (2S)-2-hydroxy-3-oxobutyl phosphate is bound at residue Arg-128.

Belongs to the DMRL synthase family. Forms an icosahedral capsid composed of 60 subunits, arranged as a dodecamer of pentamers.

The enzyme catalyses (2S)-2-hydroxy-3-oxobutyl phosphate + 5-amino-6-(D-ribitylamino)uracil = 6,7-dimethyl-8-(1-D-ribityl)lumazine + phosphate + 2 H2O + H(+). It participates in cofactor biosynthesis; riboflavin biosynthesis; riboflavin from 2-hydroxy-3-oxobutyl phosphate and 5-amino-6-(D-ribitylamino)uracil: step 1/2. In terms of biological role, catalyzes the formation of 6,7-dimethyl-8-ribityllumazine by condensation of 5-amino-6-(D-ribitylamino)uracil with 3,4-dihydroxy-2-butanone 4-phosphate. This is the penultimate step in the biosynthesis of riboflavin. The sequence is that of 6,7-dimethyl-8-ribityllumazine synthase from Erwinia tasmaniensis (strain DSM 17950 / CFBP 7177 / CIP 109463 / NCPPB 4357 / Et1/99).